The primary structure comprises 430 residues: Probable folylpolyglutamate synthase (430 aa).

Gly-37 to Thr-40 serves as a coordination point for ATP. Position 132 (Glu-132) interacts with Mg(2+). Residue Asp-300 participates in ATP binding.

Belongs to the folylpolyglutamate synthase family.

The protein localises to the mitochondrion. The enzyme catalyses (6S)-5,6,7,8-tetrahydrofolyl-(gamma-L-Glu)(n) + L-glutamate + ATP = (6S)-5,6,7,8-tetrahydrofolyl-(gamma-L-Glu)(n+1) + ADP + phosphate + H(+). It functions in the pathway cofactor biosynthesis; tetrahydrofolylpolyglutamate biosynthesis. Conversion of folates to polyglutamate derivatives. The protein is Probable folylpolyglutamate synthase (RMA1) of Saccharomyces cerevisiae (strain ATCC 204508 / S288c) (Baker's yeast).